A 66-amino-acid chain; its full sequence is Large ribosomal subunit protein bL35 (66 aa).

Basic residues predominate over residues 1–24 (MPKQKTHRGAAKRFKKTGSGKLKR). The interval 1–26 (MPKQKTHRGAAKRFKKTGSGKLKRDH) is disordered.

The protein belongs to the bacterial ribosomal protein bL35 family.

This Bacillus cytotoxicus (strain DSM 22905 / CIP 110041 / 391-98 / NVH 391-98) protein is Large ribosomal subunit protein bL35.